The following is a 148-amino-acid chain: Protein Turandot Z (148 aa).

The N-terminal stretch at Met1–Ala23 is a signal peptide.

It belongs to the Turandot family.

It is found in the secreted. Functionally, a humoral factor that may play a role in stress tolerance. This Drosophila simulans (Fruit fly) protein is Protein Turandot Z.